A 2629-amino-acid polypeptide reads, in one-letter code: Telomerase protein component 1 (2629 aa).

TEP1 N-terminal repeat units follow at residues 1–30 (MEKL…DLQP), 31–60 (LEKI…DLQP), 61–90 (TERI…DLQP), and 91–120 (LEKL…TVKS). The region spanning 227–685 (LKLTSGDSGF…VKHNLSPMPG (459 aa)) is the TROVE domain. Positions 386 to 397 (PRKHRSKRRSRQ) are enriched in basic residues. The interval 386–412 (PRKHRSKRRSRQPPRPQKTERPFSERG) is disordered. Residues 402–412 (QKTERPFSERG) show a composition bias toward basic and acidic residues. The 408-residue stretch at 1171–1578 (RLSLVTGQAG…EFLTNLHVVA (408 aa)) folds into the NACHT domain. Residue 1177-1184 (GQAGQGKT) coordinates ATP. WD repeat units follow at residues 1420-1462 (VLPQ…EVLA), 1681-1720 (TMSS…EEKA), 1723-1761 (SGCD…WVFQ), 1764-1803 (AHQY…LAFQ), 1805-1844 (THPK…VTKE), 1847-1886 (APGP…RLAA), 1889-1930 (AQCG…GCLG), 1932-1971 (LPLS…QGPQ), 1974-2013 (ELNV…HSLW), 2015-2054 (LSRY…QPHV), 2067-2106 (GHEG…APLL), 2113-2151 (CHRD…QLGQ), 2154-2191 (GHQS…LTSI), 2193-2241 (AHSG…QIRT), 2244-2282 (GHSG…DDSY), 2285-2324 (RSSV…ATAQ), 2326-2362 (PGRV…GSTS), 2375-2424 (EDWG…SSIL), 2467-2507 (PNGS…GEWI), 2555-2592 (IHLG…LLGL), and 2594-2628 (RCEG…FLSW).

As to quaternary structure, associated component of the telomerase holoenzyme complex. Component of the vault ribonucleoprotein particle, at least composed of MVP, PARP4 and one or more vault RNAs (vRNAs). Binds to VAULTRC1, VAULTRC2 and VAULTRC4/hvg4 vRNAs. As to expression, ubiquitous.

It is found in the nucleus. It localises to the chromosome. The protein resides in the telomere. Functionally, component of the telomerase ribonucleoprotein complex that is essential for the replication of chromosome termini. Also a component of the ribonucleoprotein vaults particle, a multi-subunit structure involved in nucleo-cytoplasmic transport. Responsible for the localizing and stabilizing vault RNA (vRNA) association in the vault ribonucleoprotein particle. The protein is Telomerase protein component 1 (Tep1) of Mus musculus (Mouse).